The sequence spans 130 residues: Glycine cleavage system H protein (130 aa).

In terms of domain architecture, Lipoyl-binding spans 25–107 (IATIGITEFA…YGEGWFLKVR (83 aa)). Lys-66 is subject to N6-lipoyllysine.

This sequence belongs to the GcvH family. As to quaternary structure, the glycine cleavage system is composed of four proteins: P, T, L and H. (R)-lipoate serves as cofactor.

Functionally, the glycine cleavage system catalyzes the degradation of glycine. The H protein shuttles the methylamine group of glycine from the P protein to the T protein. The polypeptide is Glycine cleavage system H protein (Trichormus variabilis (strain ATCC 29413 / PCC 7937) (Anabaena variabilis)).